The chain runs to 373 residues: Nuclear hormone receptor family member nhr-69 (373 aa).

The segment at residues 3 to 78 (EEICHICNDK…AGMKSNAIQN (76 aa)) is a DNA-binding region (nuclear receptor). NR C4-type zinc fingers lie at residues 6-26 (CHIC…CDGC) and 42-66 (CRFE…LQKC). One can recognise an NR LBD domain in the interval 93–344 (EKEDLIDQLV…SLMEELILND (252 aa)).

This sequence belongs to the nuclear hormone receptor family. In terms of assembly, interacts with R-SMAD daf-8. Expressed in the ASI neurons, hypodermis, and in tail neurons.

It localises to the nucleus. Its function is as follows. Orphan nuclear receptor which, in cooperation with R-SMAD daf-8, modulates the Insulin/IGF-1-like signaling (IIS) pathway, perhaps by regulating expression of the potassium channel exp-2, which in turn modulates the secretion of insulin-like peptide daf-28. The polypeptide is Nuclear hormone receptor family member nhr-69 (nhr-69) (Caenorhabditis elegans).